Reading from the N-terminus, the 248-residue chain is 3-oxoacyl-[acyl-carrier-protein] reductase FabG (248 aa).

NADP(+)-binding positions include 14-17 (GSTR), threonine 39, 65-66 (NL), and asparagine 92. Substrate is bound at residue serine 144. Tyrosine 157 functions as the Proton acceptor in the catalytic mechanism. Residues 157 to 161 (YSTTK) and isoleucine 190 contribute to the NADP(+) site.

The protein belongs to the short-chain dehydrogenases/reductases (SDR) family. In terms of assembly, homotetramer.

It catalyses the reaction a (3R)-hydroxyacyl-[ACP] + NADP(+) = a 3-oxoacyl-[ACP] + NADPH + H(+). It participates in lipid metabolism; fatty acid biosynthesis. In terms of biological role, catalyzes the NADPH-dependent reduction of beta-ketoacyl-ACP substrates to beta-hydroxyacyl-ACP products, the first reductive step in the elongation cycle of fatty acid biosynthesis. The protein is 3-oxoacyl-[acyl-carrier-protein] reductase FabG (fabG) of Aquifex aeolicus (strain VF5).